Here is a 216-residue protein sequence, read N- to C-terminus: MAELVFHTGPMDSGKSTLALQMDHAQSAHDRQGVRYAMHDRSGGARITSRIGLSVEAVEVTDSLDLYQDIVSRLSRGGRIDYLICDEAQFYRTKQIDQLARVVDDLDIDVYCFGILADFRTELFPGSKRLVELADRVVEPPVSPLCWCGRPATHNARIVDGKLVREGDQVGVGDIGGGSEIHYEVLCRRHHRQGITGEISRATLSEQTLPFDGSRS.

Residues 9–16 (GPMDSGKS) and 86–89 (DEAQ) contribute to the ATP site. Glu-87 (proton acceptor) is an active-site residue.

It belongs to the thymidine kinase family. Homotetramer.

It is found in the cytoplasm. It carries out the reaction thymidine + ATP = dTMP + ADP + H(+). The sequence is that of Thymidine kinase from Cutibacterium acnes (strain DSM 16379 / KPA171202) (Propionibacterium acnes).